We begin with the raw amino-acid sequence, 660 residues long: Cullin-associated NEDD8-dissociated protein 1 homolog (660 aa).

Residue Lys16 forms a Glycyl lysine isopeptide (Lys-Gly) (interchain with G-Cter in NEDD8) linkage. The interval 339-364 (TQNENDHGSDNLIDSDDGFGSDNDPE) is disordered. A compositionally biased stretch (acidic residues) spans 351–363 (IDSDDGFGSDNDP).

In terms of assembly, interacts with unneddylated cullin CDC53. Post-translationally, neddylated at Lys-16.

Functionally, assembly factor of SCF (SKP1-CUL1-F-box protein) E3 ubiquitin ligase complexes that promotes the exchange of the substrate-recognition F-box subunit in SCF complexes, thereby playing a key role in the cellular repertoire of SCF complexes. Acts as a F-box protein exchange factor. Involved in the aging process. Longevity-assurance protein. This is Cullin-associated NEDD8-dissociated protein 1 homolog (LAG2) from Saccharomyces cerevisiae (strain ATCC 204508 / S288c) (Baker's yeast).